The chain runs to 424 residues: Elongation factor Tu, mitochondrial (424 aa).

The tr-type G domain occupies 36–234 (KPHVNVGTIG…VLDTKIPLPH (199 aa)). The segment at 45–52 (GHVDHGKT) is G1. 45–52 (GHVDHGKT) contributes to the GTP binding site. The tract at residues 86–90 (GITIT) is G2. The segment at 107–110 (DCPG) is G3. GTP-binding positions include 107–111 (DCPGH) and 162–165 (NKMD). The segment at 162–165 (NKMD) is G4. The segment at 199-201 (AAA) is G5.

The protein belongs to the TRAFAC class translation factor GTPase superfamily. Classic translation factor GTPase family. EF-Tu/EF-1A subfamily.

The protein resides in the mitochondrion. This protein promotes the GTP-dependent binding of aminoacyl-tRNA to the A-site of ribosomes during protein biosynthesis. This is Elongation factor Tu, mitochondrial (tufm) from Dictyostelium discoideum (Social amoeba).